Reading from the N-terminus, the 201-residue chain is FMN-dependent NADH:quinone oxidoreductase (201 aa).

FMN-binding positions include S10, S16–S18, M96–F99, and S140–G143.

It belongs to the azoreductase type 1 family. Homodimer. FMN is required as a cofactor.

The enzyme catalyses 2 a quinone + NADH + H(+) = 2 a 1,4-benzosemiquinone + NAD(+). It catalyses the reaction N,N-dimethyl-1,4-phenylenediamine + anthranilate + 2 NAD(+) = 2-(4-dimethylaminophenyl)diazenylbenzoate + 2 NADH + 2 H(+). In terms of biological role, quinone reductase that provides resistance to thiol-specific stress caused by electrophilic quinones. Functionally, also exhibits azoreductase activity. Catalyzes the reductive cleavage of the azo bond in aromatic azo compounds to the corresponding amines. In Escherichia coli O6:H1 (strain CFT073 / ATCC 700928 / UPEC), this protein is FMN-dependent NADH:quinone oxidoreductase.